We begin with the raw amino-acid sequence, 191 residues long: Ferric nitrobindin-like protein (191 aa).

Residues 20–26 carry the GXWXGXG motif; sequence GDWAGAG.

Belongs to the nitrobindin family.

This chain is Ferric nitrobindin-like protein, found in Streptomyces coelicolor (strain ATCC BAA-471 / A3(2) / M145).